The sequence spans 994 residues: MERSQSQRHGGEQSWWGSAPQYQYMPFEHCTSYGLPSENGGLQHRPRKDMGPRHNAHPTQIYGHQKEQYSYKAQDGGMPKKMGSSSTMDSLDEDHYSKCQDCVHRLGRVLRRKLGEDWIFLVLLGLLMALVSWCMDYVSAKSLQAYKWTYAQMKPSLPLQYLAWVTFPLILILFSALFCQLISPQAVGSGIPEMKTILRGVVLKEYLTLKAFVAKVVALTAGLGSGIPVGKEGPFVHIASICAAVLSKFMSMFSGVYEQPYYYTDILTVGCAVGVGCCFGTPLGGVLFSIEVTSTYFAVRNYWRGFFAATFSAFVFRVLAVWNKDAVTITALFRTNFRMDFPFDLKELPAFAVIGICCGFLGAVFVYLHRQVMLGVRKHKCLSQFLAKHRLLYPGIVTFVIASLTFPPGMGQFMAGELMPREAISTLFDNNTWVKHIGDPQSLGQSAVWLHPQVNVIIIILLFFVMKFWMSIVATTMPIPCGGFMPVFVLGAAFGRLVGEIMAMLFPEGILFDDIIYKILPGGYAVIGAAALTGAVSHTVSTAVICFELTGQIAHILPMMVAVILANMVAQSLQPSLYDSIIQVKKLPYLPDLGWNQLSKFTIFVEDIMVRDVKFVSASCTYGELRNLLQATTVKTLPLVDSKDSMILLGSVERSELQSLLQRHLCAERRLKAAQDMARKLSELPYNGKAQLAGDWHPGGRPESFAFVDEDEDEDLSRKMELPLTPAPPPPSPPPPPSQFPIAPSNPEEPNGPLPSHKQPPEASDSADQRSSTFQRLLHCLLGKAHSKKKKITQDSTDLVDNMSPEEIEAWEREQLSQPVCFDCCCIDQSPFQLVEQTTLHKTHTLFSLLGLHLAYVTSMGKLRGVLALEELQKAIEGHTKSGVQLRPPLASFRNTTSIRKTPGGPPPPAEGWNVPEDGDGAPGREVMVPTMPETPVPPPSPEAPSCLAPARAEGELEELEMVGSLEPEEELADILHGPSLRSTDEEDEDELIL.

Residues 1–118 lie on the Cytoplasmic side of the membrane; the sequence is MERSQSQRHG…VLRRKLGEDW (118 aa). Residues 119-150 form a helical membrane-spanning segment; it reads IFLVLLGLLMALVSWCMDYVSAKSLQAYKWTY. The Extracellular portion of the chain corresponds to 151–158; the sequence is AQMKPSLP. A helical membrane pass occupies residues 159–179; the sequence is LQYLAWVTFPLILILFSALFC. The Cytoplasmic portion of the chain corresponds to 180–183; it reads QLIS. Positions 184-189 form an intramembrane region, note=Loop between two helices; sequence PQAVGS. The Selectivity filter part_1 motif lies at 188–192; the sequence is GSGIP. Ser189 provides a ligand contact to chloride. Residues 190–195 constitute an intramembrane region (helical); it reads GIPEMK. Residues 196–208 are Cytoplasmic-facing; that stretch reads TILRGVVLKEYLT. The segment at residues 209–224 is an intramembrane region (helical); that stretch reads LKAFVAKVVALTAGLG. The note=Loop between two helices intramembrane region spans 225-230; the sequence is SGIPVG. Residues 230–234 carry the Selectivity filter part_2 motif; it reads GKEGP. An intramembrane region (helical) is located at residues 231–246; that stretch reads KEGPFVHIASICAAVL. The Cytoplasmic portion of the chain corresponds to 247 to 268; it reads SKFMSMFSGVYEQPYYYTDILT. 2 intramembrane regions (helical) span residues 269-280 and 281-290; these read VGCAVGVGCCFG and TPLGGVLFSI. Topologically, residues 291–301 are cytoplasmic; sequence EVTSTYFAVRN. A helical transmembrane segment spans residues 302-321; it reads YWRGFFAATFSAFVFRVLAV. The Extracellular segment spans residues 322 to 347; sequence WNKDAVTITALFRTNFRMDFPFDLKE. Residues 348–376 form a helical membrane-spanning segment; the sequence is LPAFAVIGICCGFLGAVFVYLHRQVMLGV. At 377–390 the chain is on the cytoplasmic side; the sequence is RKHKCLSQFLAKHR. Residues 391–408 form a helical membrane-spanning segment; the sequence is LLYPGIVTFVIASLTFPP. The Extracellular portion of the chain corresponds to 409-414; the sequence is GMGQFM. The note=Loop between two helices intramembrane region spans 415–418; the sequence is AGEL. The helical intramembrane region spans 419–426; it reads MPREAIST. Over 427–457 the chain is Extracellular; sequence LFDNNTWVKHIGDPQSLGQSAVWLHPQVNVI. An intramembrane region (helical) is located at residues 458 to 475; sequence IIILLFFVMKFWMSIVAT. The note=Loop between two helices intramembrane region spans 476–482; it reads TMPIPCG. The Selectivity filter part_3 signature appears at 482 to 486; it reads GGFMP. The helical intramembrane region spans 483-498; it reads GFMPVFVLGAAFGRLV. Phe484 contributes to the chloride binding site. Residues 499–521 are Extracellular-facing; the sequence is GEIMAMLFPEGILFDDIIYKILP. An intramembrane region (helical) is located at residues 522–538; sequence GGYAVIGAAALTGAVSH. The segment at residues 539-540 is an intramembrane region (note=Loop between two helices); it reads TV. The segment at residues 541–554 is an intramembrane region (helical); it reads STAVICFELTGQIA. Residues 555–557 lie on the Extracellular side of the membrane; that stretch reads HIL. The segment at residues 558 to 571 is an intramembrane region (helical); the sequence is PMMVAVILANMVAQ. Positions 572–575 form an intramembrane region, note=Loop between two helices; that stretch reads SLQP. Positions 576-578 form an intramembrane region, helical; sequence SLY. Chloride is bound at residue Tyr578. Over 579 to 994 the chain is Cytoplasmic; that stretch reads DSIIQVKKLP…DEEDEDELIL (416 aa). The CBS 1 domain occupies 609–668; that stretch reads MVRDVKFVSASCTYGELRNLLQATTVKTLPLVDSKDSMILLGSVERSELQSLLQRHLCAE. The disordered stretch occupies residues 710 to 770; that stretch reads EDEDEDLSRK…PEASDSADQR (61 aa). Over residues 725–739 the composition is skewed to pro residues; the sequence is TPAPPPPSPPPPPSQ. In terms of domain architecture, CBS 2 spans 827–882; sequence IDQSPFQLVEQTTLHKTHTLFSLLGLHLAYVTSMGKLRGVLALEELQKAIEGHTKS. Disordered regions lie at residues 886–954 and 971–994; these read LRPP…ARAE and ELADILHGPSLRSTDEEDEDELIL. Ser892 carries the phosphoserine modification. Over residues 933-943 the composition is skewed to pro residues; it reads PETPVPPPSPE. Residues 985–994 are compositionally biased toward acidic residues; sequence DEEDEDELIL.

The protein belongs to the chloride channel (TC 2.A.49) family. ClC-1/CLCN1 subfamily. As to quaternary structure, homodimer. Predominantly expressed in skeletal muscles.

Its subcellular location is the cell membrane. It localises to the sarcolemma. The protein localises to the T-tubule. The catalysed reaction is chloride(in) = chloride(out). The enzyme catalyses thiocyanate(in) = thiocyanate(out). It carries out the reaction bromide(in) = bromide(out). It catalyses the reaction nitrate(in) = nitrate(out). The catalysed reaction is iodide(out) = iodide(in). Its activity is regulated as follows. Modulated by membrane voltage with depolarization favouring channel opening and hyperpolarization favouring channel closure. Inhibited by acidic pH and ATP binding due to a shift of voltage dependence of common gating to more positive voltages. Inhibited by 9-anthracene-carboxylic. In terms of biological role, voltage-gated chloride channel involved in skeletal muscle excitability. Generates most of the plasma membrane chloride conductance in skeletal muscle fibers, stabilizes the resting membrane potential and contributes to the repolarization phase during action potential firing. Forms a homodimeric channel where each subunit has its own ion conduction pathway. Conducts double-barreled currents controlled by two types of gates, two fast glutamate gates that control each subunit independently and a slow common gate that opens and shuts off both subunits simultaneously. Has a significant open probability at muscle resting potential and is further activated upon membrane depolarization. Permeable to small monovalent anions with ion selectivity for chloride &gt; thiocyanate &gt; bromide &gt; nitrate &gt; iodide. In Mus musculus (Mouse), this protein is Chloride channel protein 1 (Clcn1).